The chain runs to 274 residues: Thymidylate synthase (274 aa).

R21 lines the dUMP pocket. H51 provides a ligand contact to (6R)-5,10-methylene-5,6,7,8-tetrahydrofolate. 123 to 124 (RR) is a dUMP binding site. C156 functions as the Nucleophile in the catalytic mechanism. Residues 176–179 (RSAD), N187, and 217–219 (HIY) contribute to the dUMP site. Residue D179 coordinates (6R)-5,10-methylene-5,6,7,8-tetrahydrofolate. A273 is a (6R)-5,10-methylene-5,6,7,8-tetrahydrofolate binding site.

The protein belongs to the thymidylate synthase family. Bacterial-type ThyA subfamily. As to quaternary structure, homodimer.

It is found in the cytoplasm. The enzyme catalyses dUMP + (6R)-5,10-methylene-5,6,7,8-tetrahydrofolate = 7,8-dihydrofolate + dTMP. Its pathway is pyrimidine metabolism; dTTP biosynthesis. Functionally, catalyzes the reductive methylation of 2'-deoxyuridine-5'-monophosphate (dUMP) to 2'-deoxythymidine-5'-monophosphate (dTMP) while utilizing 5,10-methylenetetrahydrofolate (mTHF) as the methyl donor and reductant in the reaction, yielding dihydrofolate (DHF) as a by-product. This enzymatic reaction provides an intracellular de novo source of dTMP, an essential precursor for DNA biosynthesis. This chain is Thymidylate synthase, found in Flavobacterium psychrophilum (strain ATCC 49511 / DSM 21280 / CIP 103535 / JIP02/86).